The following is a 144-amino-acid chain: Transcriptional regulator MraZ (144 aa).

2 consecutive SpoVT-AbrB domains span residues 5-47 (TYTP…PRAE) and 77-120 (TDEQ…DAQA).

The protein belongs to the MraZ family. Forms oligomers.

The protein localises to the cytoplasm. Its subcellular location is the nucleoid. This is Transcriptional regulator MraZ from Mycolicibacterium gilvum (strain PYR-GCK) (Mycobacterium gilvum (strain PYR-GCK)).